Here is a 185-residue protein sequence, read N- to C-terminus: Ribosome-recycling factor (185 aa).

This sequence belongs to the RRF family.

It localises to the cytoplasm. In terms of biological role, responsible for the release of ribosomes from messenger RNA at the termination of protein biosynthesis. May increase the efficiency of translation by recycling ribosomes from one round of translation to another. This is Ribosome-recycling factor from Edwardsiella ictaluri (strain 93-146).